A 150-amino-acid polypeptide reads, in one-letter code: D-aminoacyl-tRNA deacylase (150 aa).

Positions 138–139 (GP) match the Gly-cisPro motif, important for rejection of L-amino acids motif.

It belongs to the DTD family. Homodimer.

The protein localises to the cytoplasm. It catalyses the reaction glycyl-tRNA(Ala) + H2O = tRNA(Ala) + glycine + H(+). The catalysed reaction is a D-aminoacyl-tRNA + H2O = a tRNA + a D-alpha-amino acid + H(+). Functionally, an aminoacyl-tRNA editing enzyme that deacylates mischarged D-aminoacyl-tRNAs. Also deacylates mischarged glycyl-tRNA(Ala), protecting cells against glycine mischarging by AlaRS. Acts via tRNA-based rather than protein-based catalysis; rejects L-amino acids rather than detecting D-amino acids in the active site. By recycling D-aminoacyl-tRNA to D-amino acids and free tRNA molecules, this enzyme counteracts the toxicity associated with the formation of D-aminoacyl-tRNA entities in vivo and helps enforce protein L-homochirality. In Thermosipho melanesiensis (strain DSM 12029 / CIP 104789 / BI429), this protein is D-aminoacyl-tRNA deacylase.